The chain runs to 266 residues: UPF0294 protein YafD (266 aa).

The protein belongs to the UPF0294 family.

Its subcellular location is the cytoplasm. The sequence is that of UPF0294 protein YafD from Shigella dysenteriae serotype 1 (strain Sd197).